A 256-amino-acid chain; its full sequence is 5-oxoprolinase subunit A (256 aa).

The protein belongs to the LamB/PxpA family. As to quaternary structure, forms a complex composed of PxpA, PxpB and PxpC.

It catalyses the reaction 5-oxo-L-proline + ATP + 2 H2O = L-glutamate + ADP + phosphate + H(+). Catalyzes the cleavage of 5-oxoproline to form L-glutamate coupled to the hydrolysis of ATP to ADP and inorganic phosphate. The polypeptide is 5-oxoprolinase subunit A (Azoarcus sp. (strain BH72)).